Reading from the N-terminus, the 132-residue chain is Small ribosomal subunit protein uS12 (132 aa).

D89 bears the 3-methylthioaspartic acid mark. Residues 103–132 form a disordered region; the sequence is DTSGVADRRQSRSKYGAKQPKEGGAAKGKK.

This sequence belongs to the universal ribosomal protein uS12 family. As to quaternary structure, part of the 30S ribosomal subunit. Contacts proteins S8 and S17. May interact with IF1 in the 30S initiation complex.

Functionally, with S4 and S5 plays an important role in translational accuracy. In terms of biological role, interacts with and stabilizes bases of the 16S rRNA that are involved in tRNA selection in the A site and with the mRNA backbone. Located at the interface of the 30S and 50S subunits, it traverses the body of the 30S subunit contacting proteins on the other side and probably holding the rRNA structure together. The combined cluster of proteins S8, S12 and S17 appears to hold together the shoulder and platform of the 30S subunit. This chain is Small ribosomal subunit protein uS12, found in Chlorobium phaeovibrioides (strain DSM 265 / 1930) (Prosthecochloris vibrioformis (strain DSM 265)).